Consider the following 242-residue polypeptide: Pyridoxine 5'-phosphate synthase (242 aa).

N8 contributes to the 3-amino-2-oxopropyl phosphate binding site. 10–11 (DH) serves as a coordination point for 1-deoxy-D-xylulose 5-phosphate. R19 provides a ligand contact to 3-amino-2-oxopropyl phosphate. H44 (proton acceptor) is an active-site residue. R46 and H51 together coordinate 1-deoxy-D-xylulose 5-phosphate. Catalysis depends on E71, which acts as the Proton acceptor. T101 contributes to the 1-deoxy-D-xylulose 5-phosphate binding site. H193 acts as the Proton donor in catalysis. 3-amino-2-oxopropyl phosphate contacts are provided by residues G194 and 215–216 (GF).

Belongs to the PNP synthase family. In terms of assembly, homooctamer; tetramer of dimers.

The protein resides in the cytoplasm. It carries out the reaction 3-amino-2-oxopropyl phosphate + 1-deoxy-D-xylulose 5-phosphate = pyridoxine 5'-phosphate + phosphate + 2 H2O + H(+). The protein operates within cofactor biosynthesis; pyridoxine 5'-phosphate biosynthesis; pyridoxine 5'-phosphate from D-erythrose 4-phosphate: step 5/5. Its function is as follows. Catalyzes the complicated ring closure reaction between the two acyclic compounds 1-deoxy-D-xylulose-5-phosphate (DXP) and 3-amino-2-oxopropyl phosphate (1-amino-acetone-3-phosphate or AAP) to form pyridoxine 5'-phosphate (PNP) and inorganic phosphate. In Elusimicrobium minutum (strain Pei191), this protein is Pyridoxine 5'-phosphate synthase.